A 382-amino-acid polypeptide reads, in one-letter code: Protein arginine N-methyltransferase PRMT10 (382 aa).

The disordered stretch occupies residues M1–G21. The segment covering G7–A17 has biased composition (low complexity). An SAM-dependent MTase PRMT-type domain is found at E28–E359. Active-site residues include E142 and E151. The segment at E189–E229 is dimerization arm.

It belongs to the class I-like SAM-binding methyltransferase superfamily. Protein arginine N-methyltransferase family. Ring-like homodimer.

The catalysed reaction is L-arginyl-[protein] + 2 S-adenosyl-L-methionine = N(omega),N(omega)-dimethyl-L-arginyl-[protein] + 2 S-adenosyl-L-homocysteine + 2 H(+). Functionally, methylates (mono and asymmetric dimethylation) the guanidino nitrogens of arginyl residues in some proteins. The polypeptide is Protein arginine N-methyltransferase PRMT10 (PRMT10) (Oryza sativa subsp. indica (Rice)).